A 109-amino-acid polypeptide reads, in one-letter code: Hainantoxin-XVIII (109 aa).

The signal sequence occupies residues 1-18; it reads MKLSIIIIATSLVIAVVA. Residues 19 to 46 constitute a propeptide that is removed on maturation; the sequence is FPSKDSKAIENDKTEQRMEIVVQETARA. 4 disulfide bridges follow: C47–C62, C55–C68, C59–C108, and C61–C81.

The protein belongs to the neurotoxin 25 family. F7 subfamily. In terms of tissue distribution, expressed by the venom gland.

Its subcellular location is the secreted. In terms of biological role, putative ion channel inhibitor. The polypeptide is Hainantoxin-XVIII (Cyriopagopus hainanus (Chinese bird spider)).